Reading from the N-terminus, the 293-residue chain is 4-hydroxy-tetrahydrodipicolinate synthase (293 aa).

Thr44 contributes to the pyruvate binding site. Tyr132 functions as the Proton donor/acceptor in the catalytic mechanism. Lys162 functions as the Schiff-base intermediate with substrate in the catalytic mechanism. Ile204 is a binding site for pyruvate.

The protein belongs to the DapA family. As to quaternary structure, homotetramer; dimer of dimers.

The protein localises to the cytoplasm. It carries out the reaction L-aspartate 4-semialdehyde + pyruvate = (2S,4S)-4-hydroxy-2,3,4,5-tetrahydrodipicolinate + H2O + H(+). Its pathway is amino-acid biosynthesis; L-lysine biosynthesis via DAP pathway; (S)-tetrahydrodipicolinate from L-aspartate: step 3/4. Catalyzes the condensation of (S)-aspartate-beta-semialdehyde [(S)-ASA] and pyruvate to 4-hydroxy-tetrahydrodipicolinate (HTPA). In Erythrobacter litoralis (strain HTCC2594), this protein is 4-hydroxy-tetrahydrodipicolinate synthase.